Here is a 225-residue protein sequence, read N- to C-terminus: Cbp/p300-interacting transactivator 2 (225 aa).

This sequence belongs to the CITED family.

Its subcellular location is the nucleus. Transcriptional coactivator or corepressor of the p300/CBP-mediated transcription complex. May be involved in sex determination, early gonad development, left-right patterning during embryogenesis and differentiation of the adrenal cortex. This is Cbp/p300-interacting transactivator 2 (cited2) from Xenopus laevis (African clawed frog).